The primary structure comprises 145 residues: Large ribosomal subunit protein uL15 (145 aa).

Positions 1–13 are enriched in basic and acidic residues; it reads MNLHELKYNEGAR. The segment at 1 to 56 is disordered; sequence MNLHELKYNEGARKEKHRVGRGHAAGKGKQAGKGQSGQLKRTGSKPGFEGGQNPWY. The span at 14 to 26 shows a compositional bias: basic residues; the sequence is KEKHRVGRGHAAG.

The protein belongs to the universal ribosomal protein uL15 family. In terms of assembly, part of the 50S ribosomal subunit.

Its function is as follows. Binds to the 23S rRNA. The sequence is that of Large ribosomal subunit protein uL15 from Mycoplasma mobile (strain ATCC 43663 / 163K / NCTC 11711) (Mesomycoplasma mobile).